A 78-amino-acid polypeptide reads, in one-letter code: Large ribosomal subunit protein bL28 (78 aa).

Positions 1–31 are disordered; the sequence is MAAHCQVTGAEPGFGHSISHSHRRNKRRFDP.

Belongs to the bacterial ribosomal protein bL28 family.

The chain is Large ribosomal subunit protein bL28 from Arthrobacter sp. (strain FB24).